Reading from the N-terminus, the 119-residue chain is Hydrogenase maturation factor HypA (119 aa).

Histidine 2 provides a ligand contact to Ni(2+). Cysteine 73, cysteine 76, cysteine 89, and cysteine 92 together coordinate Zn(2+).

Belongs to the HypA/HybF family.

Involved in the maturation of [NiFe] hydrogenases. Required for nickel insertion into the metal center of the hydrogenase. The polypeptide is Hydrogenase maturation factor HypA (Dehalococcoides mccartyi (strain CBDB1)).